Here is a 416-residue protein sequence, read N- to C-terminus: Serine hydroxymethyltransferase (416 aa).

(6S)-5,6,7,8-tetrahydrofolate-binding positions include leucine 121 and glycine 125 to leucine 127. Lysine 229 is subject to N6-(pyridoxal phosphate)lysine.

This sequence belongs to the SHMT family. In terms of assembly, homodimer. Requires pyridoxal 5'-phosphate as cofactor.

It is found in the cytoplasm. It catalyses the reaction (6R)-5,10-methylene-5,6,7,8-tetrahydrofolate + glycine + H2O = (6S)-5,6,7,8-tetrahydrofolate + L-serine. It functions in the pathway one-carbon metabolism; tetrahydrofolate interconversion. The protein operates within amino-acid biosynthesis; glycine biosynthesis; glycine from L-serine: step 1/1. In terms of biological role, catalyzes the reversible interconversion of serine and glycine with tetrahydrofolate (THF) serving as the one-carbon carrier. This reaction serves as the major source of one-carbon groups required for the biosynthesis of purines, thymidylate, methionine, and other important biomolecules. Also exhibits THF-independent aldolase activity toward beta-hydroxyamino acids, producing glycine and aldehydes, via a retro-aldol mechanism. This Neisseria gonorrhoeae protein is Serine hydroxymethyltransferase.